The sequence spans 495 residues: Keratin, type II cytoskeletal 74 (495 aa).

The tract at residues 1–105 is head; that stretch reads MASCHTAGHR…DPEIQKVRAQ (105 aa). The segment at 106–141 is coil 1A; sequence EREQIKALNDKFASFIDKVRFLEQQNQVLQTKWELL. Residues 106-419 enclose the IF rod domain; it reads EREQIKALND…KLLEGEENRM (314 aa). Residues 142 to 160 form a linker 1 region; it reads QQLDLSNCRRNLEPVYEAH. Positions 161-252 are coil 1B; that stretch reads ISNLRKQLEM…CLYDEEISQL (92 aa). A linker 12 region spans residues 253 to 276; the sequence is QTHASETSVILSMDNNRDLDLAGI. Positions 277–415 are coil 2; sequence IAEVRAHYED…ATYRKLLEGE (139 aa). Positions 416–495 are tail; sequence ENRMSGENPS…AAGTLARKTT (80 aa). The segment at 449 to 495 is disordered; that stretch reads DSEAGNAVGSPSTPRNSQSKTRGSSVDPRDAQDESAAAAGTLARKTT. Over residues 457–472 the composition is skewed to polar residues; it reads GSPSTPRNSQSKTRGS.

Belongs to the intermediate filament family. In terms of assembly, heterotetramer of two type I and two type II keratins. As to expression, expressed in epidermis with a particularly strong staining in the nail matrix, nail bed and hyponychium (at protein level).

In terms of biological role, has a role in hair formation. Specific component of keratin intermediate filaments in the inner root sheath (IRS) of the hair follicle. This Mus musculus (Mouse) protein is Keratin, type II cytoskeletal 74.